A 274-amino-acid chain; its full sequence is MEQKKITQGDLVSMFLRSNLQQASFNFERIHGLGFCYDMIPAIKRLYPLKADQVAALKRHLVFFNTTPAVCGPVIAVTAAMEEARANGAAIDDGAINGIKVGLMGPLAGVGDPLVWGTLRPITAALGASLALSGNILGPLLFFFIFNAVRLAMKWYGLQLGFRKGVNIVSDMGGNLLQKLTEGASILGLFVMGVLVTKWTTINVPLVVSQTPGADGATVTMTVQNILDQLCPGLLALGLTLLMVRLLNKKVNPVWLIFALFGLGIIGNALGFLS.

The region spanning 4 to 273 (KKITQGDLVS…GIIGNALGFL (270 aa)) is the PTS EIID domain. The next 6 membrane-spanning stretches (helical) occupy residues 61–81 (LVFF…TAAM), 99–119 (IKVG…WGTL), 126–146 (LGAS…FFIF), 186–206 (ILGL…NVPL), 226–246 (ILDQ…MVRL), and 253–273 (PVWL…LGFL).

Its subcellular location is the cell inner membrane. Its function is as follows. The phosphoenolpyruvate-dependent sugar phosphotransferase system (PTS), a major carbohydrate active transport system, catalyzes the phosphorylation of incoming sugar substrates concomitant with their translocation across the cell membrane. The enzyme II SorABFM PTS system is involved in sorbose transport. The sequence is that of PTS system sorbose-specific EIID component from Klebsiella pneumoniae.